A 269-amino-acid chain; its full sequence is Formamidopyrimidine-DNA glycosylase (269 aa).

Proline 2 (schiff-base intermediate with DNA) is an active-site residue. Residue glutamate 3 is the Proton donor of the active site. The active-site Proton donor; for beta-elimination activity is lysine 57. 3 residues coordinate DNA: histidine 90, arginine 109, and lysine 150. An FPG-type zinc finger spans residues 235–269 (QVYGRAGELCRRCGNVIEIAKHGQRSTFFCRHCQH). Arginine 259 acts as the Proton donor; for delta-elimination activity in catalysis.

The protein belongs to the FPG family. In terms of assembly, monomer. Zn(2+) is required as a cofactor.

The catalysed reaction is Hydrolysis of DNA containing ring-opened 7-methylguanine residues, releasing 2,6-diamino-4-hydroxy-5-(N-methyl)formamidopyrimidine.. The enzyme catalyses 2'-deoxyribonucleotide-(2'-deoxyribose 5'-phosphate)-2'-deoxyribonucleotide-DNA = a 3'-end 2'-deoxyribonucleotide-(2,3-dehydro-2,3-deoxyribose 5'-phosphate)-DNA + a 5'-end 5'-phospho-2'-deoxyribonucleoside-DNA + H(+). Functionally, involved in base excision repair of DNA damaged by oxidation or by mutagenic agents. Acts as a DNA glycosylase that recognizes and removes damaged bases. Has a preference for oxidized purines, such as 7,8-dihydro-8-oxoguanine (8-oxoG). Has AP (apurinic/apyrimidinic) lyase activity and introduces nicks in the DNA strand. Cleaves the DNA backbone by beta-delta elimination to generate a single-strand break at the site of the removed base with both 3'- and 5'-phosphates. The chain is Formamidopyrimidine-DNA glycosylase from Yersinia enterocolitica serotype O:8 / biotype 1B (strain NCTC 13174 / 8081).